Here is a 234-residue protein sequence, read N- to C-terminus: Leucyl/phenylalanyl-tRNA--protein transferase (234 aa).

This sequence belongs to the L/F-transferase family.

It localises to the cytoplasm. The enzyme catalyses N-terminal L-lysyl-[protein] + L-leucyl-tRNA(Leu) = N-terminal L-leucyl-L-lysyl-[protein] + tRNA(Leu) + H(+). It catalyses the reaction N-terminal L-arginyl-[protein] + L-leucyl-tRNA(Leu) = N-terminal L-leucyl-L-arginyl-[protein] + tRNA(Leu) + H(+). It carries out the reaction L-phenylalanyl-tRNA(Phe) + an N-terminal L-alpha-aminoacyl-[protein] = an N-terminal L-phenylalanyl-L-alpha-aminoacyl-[protein] + tRNA(Phe). In terms of biological role, functions in the N-end rule pathway of protein degradation where it conjugates Leu, Phe and, less efficiently, Met from aminoacyl-tRNAs to the N-termini of proteins containing an N-terminal arginine or lysine. The sequence is that of Leucyl/phenylalanyl-tRNA--protein transferase from Syntrophobacter fumaroxidans (strain DSM 10017 / MPOB).